Reading from the N-terminus, the 295-residue chain is Bifunctional protein FolD (295 aa).

Residues 166–168 (GRS), Ser-191, and Ile-232 each bind NADP(+).

The protein belongs to the tetrahydrofolate dehydrogenase/cyclohydrolase family. As to quaternary structure, homodimer.

The enzyme catalyses (6R)-5,10-methylene-5,6,7,8-tetrahydrofolate + NADP(+) = (6R)-5,10-methenyltetrahydrofolate + NADPH. The catalysed reaction is (6R)-5,10-methenyltetrahydrofolate + H2O = (6R)-10-formyltetrahydrofolate + H(+). Its pathway is one-carbon metabolism; tetrahydrofolate interconversion. Functionally, catalyzes the oxidation of 5,10-methylenetetrahydrofolate to 5,10-methenyltetrahydrofolate and then the hydrolysis of 5,10-methenyltetrahydrofolate to 10-formyltetrahydrofolate. This is Bifunctional protein FolD from Rhodopseudomonas palustris (strain HaA2).